The sequence spans 309 residues: tRNA uridine(34) hydroxylase (309 aa).

The region spanning 123 to 217 is the Rhodanese domain; that stretch reads DDPEVIVVDT…YLEEVPEEQT (95 aa). Cysteine 177 functions as the Cysteine persulfide intermediate in the catalytic mechanism.

Belongs to the TrhO family.

The catalysed reaction is uridine(34) in tRNA + AH2 + O2 = 5-hydroxyuridine(34) in tRNA + A + H2O. In terms of biological role, catalyzes oxygen-dependent 5-hydroxyuridine (ho5U) modification at position 34 in tRNAs. In Saccharophagus degradans (strain 2-40 / ATCC 43961 / DSM 17024), this protein is tRNA uridine(34) hydroxylase.